Consider the following 252-residue polypeptide: Mediator of RNA polymerase II transcription subunit 8 (252 aa).

A coiled-coil region spans residues 6–30 (QDQIKTLEQSRQRLVQLTRSLASLI). The tract at residues 170–252 (RQLEDEDEEE…MTTGIPPTQR (83 aa)) is disordered. The span at 173–196 (EDEDEEESESESEEEGEGEEEEME) shows a compositional bias: acidic residues.

Belongs to the Mediator complex subunit 8 family. Component of the Mediator complex.

It is found in the nucleus. Functionally, component of the Mediator complex, a coactivator involved in the regulated transcription of nearly all RNA polymerase II-dependent genes. Mediator functions as a bridge to convey information from gene-specific regulatory proteins to the basal RNA polymerase II transcription machinery. Mediator is recruited to promoters by direct interactions with regulatory proteins and serves as a scaffold for the assembly of a functional preinitiation complex with RNA polymerase II and the general transcription factors. The sequence is that of Mediator of RNA polymerase II transcription subunit 8 (med8) from Neosartorya fischeri (strain ATCC 1020 / DSM 3700 / CBS 544.65 / FGSC A1164 / JCM 1740 / NRRL 181 / WB 181) (Aspergillus fischerianus).